The sequence spans 441 residues: E3 ubiquitin-protein ligase APD1 (441 aa).

The next 2 helical transmembrane spans lie at 60-80 and 305-325; these read SNLYCFSLALLIWFFASFILI and IAYVIGTGVVICFMLVAIQFC. Residues 390-429 form an RING-type zinc finger; sequence CAICFDVPRDCFFLPCGHSVSCYECGTTMQEADGSCPICR.

As to expression, expressed in the shoot apical meristems (SAM), root tips and inflorescences, and, at low levels, in floral buds and pollen.

It is found in the endomembrane system. The protein resides in the vacuole membrane. It catalyses the reaction S-ubiquitinyl-[E2 ubiquitin-conjugating enzyme]-L-cysteine + [acceptor protein]-L-lysine = [E2 ubiquitin-conjugating enzyme]-L-cysteine + N(6)-ubiquitinyl-[acceptor protein]-L-lysine.. The protein operates within protein modification; protein ubiquitination. In terms of biological role, involved in pollen mitosis II (PMII) regulation during male gametogenesis. This chain is E3 ubiquitin-protein ligase APD1, found in Arabidopsis thaliana (Mouse-ear cress).